The primary structure comprises 213 residues: Methylthioribulose-1-phosphate dehydratase (213 aa).

Zn(2+)-binding residues include His104 and His106.

This sequence belongs to the aldolase class II family. MtnB subfamily. Zn(2+) is required as a cofactor.

It catalyses the reaction 5-(methylsulfanyl)-D-ribulose 1-phosphate = 5-methylsulfanyl-2,3-dioxopentyl phosphate + H2O. It functions in the pathway amino-acid biosynthesis; L-methionine biosynthesis via salvage pathway; L-methionine from S-methyl-5-thio-alpha-D-ribose 1-phosphate: step 2/6. Its function is as follows. Catalyzes the dehydration of methylthioribulose-1-phosphate (MTRu-1-P) into 2,3-diketo-5-methylthiopentyl-1-phosphate (DK-MTP-1-P). The sequence is that of Methylthioribulose-1-phosphate dehydratase from Stenotrophomonas maltophilia (strain R551-3).